A 391-amino-acid polypeptide reads, in one-letter code: Pyoverdine export membrane fusion protein PvdR (391 aa).

The signal sequence occupies residues 1–24; the sequence is MRRTRSTRRALLVAVCLSPLIALA. Residues 108–180 are a coiled coil; it reads IEMLKAQLAE…QASLRSDEAE (73 aa). The segment at 263–289 is disordered; it reads LPVPPKPLDQSNQGGGSPTSGSGGQSG. The span at 275-289 shows a compositional bias: gly residues; it reads QGGGSPTSGSGGQSG.

The protein belongs to the membrane fusion protein (MFP) (TC 8.A.1) family. As to quaternary structure, part of the tripartite efflux system PvdRT-OpmQ, which is composed of an inner membrane component with both ATPase and permease domains, PvdT, a periplasmic membrane fusion protein, PvdR, and an outer membrane component, OpmQ.

It is found in the periplasm. Functionally, part of the tripartite efflux system PvdRT-OpmQ required for the secretion into the extracellular milieu of the siderophore pyoverdine (PVD), which is involved in iron acquisition. This subunit is an adapter protein that stimulates the ATPase activity of PvdT and connects the inner and outer membrane components. The system is responsible for export of newly synthesized PVD after the final steps of biosynthesis have taken place in the periplasm. It is also responsible for recycling of PVD after internalization of ferri-PVD into the periplasm by the outer-membrane receptor FpvA and release of iron from PVD, thus making PVD available for new cycles of iron uptake. In addition, can expel unwanted metals complexed with PVD from the periplasm into the extracellular medium. Does not contribute to resistance to antibiotics belonging to the classes of tetracyclines, aminoglycosides, beta-lactams and macrolides, and chloramphenicol. This is Pyoverdine export membrane fusion protein PvdR from Pseudomonas aeruginosa (strain ATCC 15692 / DSM 22644 / CIP 104116 / JCM 14847 / LMG 12228 / 1C / PRS 101 / PAO1).